The sequence spans 264 residues: tRNA (guanine-N(1)-)-methyltransferase (264 aa).

S-adenosyl-L-methionine is bound by residues G125 and 145–150 (LGDFVL).

This sequence belongs to the RNA methyltransferase TrmD family. As to quaternary structure, homodimer.

It is found in the cytoplasm. It carries out the reaction guanosine(37) in tRNA + S-adenosyl-L-methionine = N(1)-methylguanosine(37) in tRNA + S-adenosyl-L-homocysteine + H(+). Specifically methylates guanosine-37 in various tRNAs. In Burkholderia ambifaria (strain ATCC BAA-244 / DSM 16087 / CCUG 44356 / LMG 19182 / AMMD) (Burkholderia cepacia (strain AMMD)), this protein is tRNA (guanine-N(1)-)-methyltransferase.